Here is a 783-residue protein sequence, read N- to C-terminus: Cation/H(+) antiporter 2 (783 aa).

12 consecutive transmembrane segments (helical) span residues 19 to 39 (LNTMFIQMACILVFSQLFYLL), 43 to 63 (CGQAGPVAQILAGIVLSPVLL), 81 to 101 (YYSFFSFALRTSFMFLIGLEV), 121 to 141 (FVVSGLLSFASLMLFIPLFGI), 145 to 165 (YFTFFLVLLVTLSNTASPVVV), 186 to 206 (ALFIELTNVVLYTIIMAFISG), 208 to 228 (IILELFLFLLATVALILINMV), 242 to 262 (YLSKAETLVFFIFLLIIGITI), 300 to 320 (EFVLPVYFGYIGFRFSIIALT), 323 to 343 (FYLGIVIIVIVTIAGKFIGVI), 355 to 375 (YWLFLPTILSVKGHVGLLLLD), and 391 to 411 (MMVAALVITTLVSGVLASFLL).

The protein belongs to the monovalent cation:proton antiporter 2 (CPA2) transporter (TC 2.A.37) family. CHX (TC 2.A.37.4) subfamily. In terms of tissue distribution, specifically expressed in pollen.

Its subcellular location is the membrane. In terms of biological role, may operate as a cation/H(+) antiporter. The sequence is that of Cation/H(+) antiporter 2 (CHX2) from Arabidopsis thaliana (Mouse-ear cress).